Consider the following 372-residue polypeptide: Probable E3 ubiquitin-protein ligase makorin-1 (372 aa).

2 C3H1-type zinc fingers span residues 20 to 45 (KHVT…HDLT) and 48 to 75 (KPAA…HCKP). Residues 78-110 (NEEFSSPQMLPPSSPSPSTDPESSQPAPRPKTQ) form a disordered region. A compositionally biased stretch (low complexity) spans 93–103 (SPSTDPESSQP). The C3H1-type 3 zinc finger occupies 153 to 180 (ALRKQLCPYAAVGECRYGINCAYLHGDV). The interval 181-208 (CDMCGLQVLHPTDNSQRSQHTKACIEAH) is makorin-type Cys-His. The RING-type zinc finger occupies 226–280 (CGVCMEVVFEKANPSERRFGILSNCNHCYCLKCIRKWRSAKQFESKIIKSCPECR). Residues 309 to 338 (GMGRKPCRYFDEGRGICPFGANCFYKHAFP) form a C3H1-type 4 zinc finger.

The catalysed reaction is S-ubiquitinyl-[E2 ubiquitin-conjugating enzyme]-L-cysteine + [acceptor protein]-L-lysine = [E2 ubiquitin-conjugating enzyme]-L-cysteine + N(6)-ubiquitinyl-[acceptor protein]-L-lysine.. It functions in the pathway protein modification; protein ubiquitination. Its function is as follows. E3 ubiquitin ligase catalyzing the covalent attachment of ubiquitin moieties onto substrate proteins. This chain is Probable E3 ubiquitin-protein ligase makorin-1, found in Tetraodon nigroviridis (Spotted green pufferfish).